A 558-amino-acid polypeptide reads, in one-letter code: Acylase ACY 1 proenzyme (558 aa).

Residue T368 is the Nucleophile of the active site.

Belongs to the gamma-glutamyltransferase family. In terms of assembly, dimer of two non-identical chains processed from the same precursor.

The enzyme catalyses (7R)-7-(4-carboxybutanamido)cephalosporanate + H2O = (7R)-7-aminocephalosporanate + glutarate. It catalyses the reaction an N-terminal (5-L-glutamyl)-[peptide] + an alpha-amino acid = 5-L-glutamyl amino acid + an N-terminal L-alpha-aminoacyl-[peptide]. It carries out the reaction glutathione + H2O = L-cysteinylglycine + L-glutamate. The catalysed reaction is an S-substituted glutathione + H2O = an S-substituted L-cysteinylglycine + L-glutamate. Its function is as follows. Besides the cephalosporin acylase I activity which converts GL-7ACA into 7-ACA; this enzyme displays some gamma glutamyltranspeptidase activity. This is Acylase ACY 1 proenzyme (acyI) from Pseudomonas sp. (strain SE83).